The primary structure comprises 239 residues: Ribonuclease PH (239 aa).

Residues Arg-87 and 125–127 (GTR) each bind phosphate.

This sequence belongs to the RNase PH family. Homohexameric ring arranged as a trimer of dimers.

The enzyme catalyses tRNA(n+1) + phosphate = tRNA(n) + a ribonucleoside 5'-diphosphate. In terms of biological role, phosphorolytic 3'-5' exoribonuclease that plays an important role in tRNA 3'-end maturation. Removes nucleotide residues following the 3'-CCA terminus of tRNAs; can also add nucleotides to the ends of RNA molecules by using nucleoside diphosphates as substrates, but this may not be physiologically important. Probably plays a role in initiation of 16S rRNA degradation (leading to ribosome degradation) during starvation. This chain is Ribonuclease PH, found in Acaryochloris marina (strain MBIC 11017).